The chain runs to 567 residues: ATP-dependent RNA helicase HAS1 (567 aa).

The interval Met-1–Gly-109 is disordered. Residues Glu-30 to Asp-40 are compositionally biased toward acidic residues. The stretch at Glu-35 to Tyr-88 forms a coiled coil. The Q motif signature appears at Asp-103–Ala-131. Positions Ile-134–Tyr-310 constitute a Helicase ATP-binding domain. Ala-147–Thr-154 is a binding site for ATP. The DEAD box motif lies at Asp-257–Asp-260. One can recognise a Helicase C-terminal domain in the interval Gly-324–Val-484.

It belongs to the DEAD box helicase family. DDX18/HAS1 subfamily. Associates in the nucleolus with the 60S and pre-60S ribosomal subunits.

The protein localises to the nucleus. It is found in the nucleolus. It carries out the reaction ATP + H2O = ADP + phosphate + H(+). ATP-dependent RNA helicase involved in 40S ribosomal subunit biogenesis. Required for the processing and cleavage of 35S pre-rRNA at sites A0, A1, and A2, leading to mature 18S rRNA. The sequence is that of ATP-dependent RNA helicase HAS1 (HAS1) from Scheffersomyces stipitis (strain ATCC 58785 / CBS 6054 / NBRC 10063 / NRRL Y-11545) (Yeast).